The chain runs to 201 residues: 3-mercaptopropionate dioxygenase (201 aa).

Residues His-89, His-91, and His-142 each contribute to the Fe cation site.

This sequence belongs to the cysteine dioxygenase family. In terms of assembly, forms homodimer in the crystal; however, there is no evidence that the dimer exists under physiological conditions or has biological significance. It depends on Fe(2+) as a cofactor.

It carries out the reaction 3-sulfanylpropanoate + O2 = 3-sulfinopropanoate + H(+). In terms of biological role, thiol dioxygenase that catalyzes the dioxygenation of 3-mercaptopropionate (3-MPA) to 3-sulfinopropionate (3-SPA). To a lesser extent (40-fold lower efficiency), is also able to oxidize cysteine to cysteine sulfinate (CSA). Cannot use N-acetyl-L-cysteine, homocysteine, and cysteamine as substrates. The physiological role of this enzyme is unclear. The chain is 3-mercaptopropionate dioxygenase from Pseudomonas aeruginosa (strain ATCC 15692 / DSM 22644 / CIP 104116 / JCM 14847 / LMG 12228 / 1C / PRS 101 / PAO1).